We begin with the raw amino-acid sequence, 601 residues long: Elongation factor 4 (601 aa).

The tr-type G domain maps to 7-189 (DTIRNFSIVA…AIVAKLPPPK (183 aa)). GTP-binding positions include 19–24 (DHGKST) and 136–139 (NKID).

It belongs to the TRAFAC class translation factor GTPase superfamily. Classic translation factor GTPase family. LepA subfamily.

The protein localises to the cell inner membrane. It catalyses the reaction GTP + H2O = GDP + phosphate + H(+). Its function is as follows. Required for accurate and efficient protein synthesis under certain stress conditions. May act as a fidelity factor of the translation reaction, by catalyzing a one-codon backward translocation of tRNAs on improperly translocated ribosomes. Back-translocation proceeds from a post-translocation (POST) complex to a pre-translocation (PRE) complex, thus giving elongation factor G a second chance to translocate the tRNAs correctly. Binds to ribosomes in a GTP-dependent manner. In Methylobacterium sp. (strain 4-46), this protein is Elongation factor 4.